We begin with the raw amino-acid sequence, 806 residues long: MSKLTTGSFSIEDLESVQITINNIVGAAKEAAEEKAKELEKAGPTLFPGLESYRDDWNFKLLDRYEPVITPMCDQCCYCTYGPCDLSGNKRGACGIDMLGHNGREFFLRVITGTACHAAHGRHLLDHLIETFGEDLPLNLGQSNVLTPNITISTGLSPKNLGEIKPAMEFVEEQLTQLLATVHAGQESAEIDYDSKALFSGSLDHVGMEISDVVQVAAYDFPKADPEAPLIEIGMGTIDKSKPFLCVIGHNVGGVTYMMDYMEEHDLTDKMEIAGLCCTAIDLSRYKEADRRPPYAKVIGSMSKELKVIRSGMPDVIVVDEQCVRGDIVPEAQKLKIPVIASNAKIMYGLPNRTDANVDDVVEELKSGAIPGCVMLDYDKLGELCIRLTMEMGPIRDAEGITAIPTDEEFADWVAKCADCGACMIACPEELDIPEAMGFAKEGDFSYLEELHDQCIGCRRCEQVCKKEIPILNIIEKVAQKQIAEEKGWMRAGRGQVSDAEIRAEGLNLVMGTTPGIIAIIGCPNYAEGTKDVYYIAEEFLKRNFIVVTTGCGAMDIGMFKDEDGKTLYERFPGGFECGGLVNIGSCVSNAHITGAAEKVAAIFAQRTLEGNLAEISDYILNRVGACGLAWGAFSQKASSIGTGCNILGIPAVLGPHSSKYRRALIAKTYEEDKWKVYDARNGQEMPIPPAPEFLLTTAETWQEAIPMMAKACIRPSDNSMGRSIKLTHWMELHKKYLGKDPEDWWKFVRNEADLPLAKREALLKELESKHGWEIDWKKKKIISGPKIKFDVSAQPTNLKRLCKEA.

Residues cysteine 73, cysteine 76, cysteine 77, cysteine 79, cysteine 84, and cysteine 94 each contribute to the [4Fe-4S] cluster site. Histidine 117 provides a ligand contact to CO. 3 residues coordinate [Ni-4Fe-4S] cluster: histidine 250, cysteine 278, and cysteine 323. 2 consecutive 4Fe-4S ferredoxin-type domains span residues 407–436 (DEEF…IPEA) and 446–475 (SYLE…LNII). [4Fe-4S] cluster is bound by residues cysteine 417, cysteine 420, cysteine 423, cysteine 427, cysteine 455, cysteine 458, cysteine 461, and cysteine 465. [Ni-4Fe-4S] cluster is bound by residues cysteine 523, cysteine 552, and cysteine 587.

The protein belongs to the Ni-containing carbon monoxide dehydrogenase family. Heterotetramer of two alpha and two epsilon subunits. The ACDS complex is made up of alpha, epsilon, beta, gamma and delta subunits with a probable stoichiometry of (alpha(2)epsilon(2))(4)-beta(8)-(gamma(1)delta(1))(8). [4Fe-4S] cluster is required as a cofactor. It depends on [Ni-4Fe-4S] cluster as a cofactor.

The catalysed reaction is CO + 2 oxidized [2Fe-2S]-[ferredoxin] + H2O = 2 reduced [2Fe-2S]-[ferredoxin] + CO2 + 2 H(+). Its pathway is one-carbon metabolism; methanogenesis from acetate. Part of the ACDS complex that catalyzes the reversible cleavage of acetyl-CoA, allowing growth on acetate as sole source of carbon and energy. The alpha-epsilon subcomponent functions as a carbon monoxide dehydrogenase. In Methanosarcina acetivorans (strain ATCC 35395 / DSM 2834 / JCM 12185 / C2A), this protein is Acetyl-CoA decarbonylase/synthase complex subunit alpha 1.